Consider the following 325-residue polypeptide: Lipoyl synthase (325 aa).

Positions 66, 71, 77, 92, 96, 99, and 303 each coordinate [4Fe-4S] cluster. In terms of domain architecture, Radical SAM core spans 78–292; that stretch reads WEDREATFLI…AQFAEGLGFA (215 aa).

The protein belongs to the radical SAM superfamily. Lipoyl synthase family. Requires [4Fe-4S] cluster as cofactor.

The protein resides in the cytoplasm. It catalyses the reaction [[Fe-S] cluster scaffold protein carrying a second [4Fe-4S](2+) cluster] + N(6)-octanoyl-L-lysyl-[protein] + 2 oxidized [2Fe-2S]-[ferredoxin] + 2 S-adenosyl-L-methionine + 4 H(+) = [[Fe-S] cluster scaffold protein] + N(6)-[(R)-dihydrolipoyl]-L-lysyl-[protein] + 4 Fe(3+) + 2 hydrogen sulfide + 2 5'-deoxyadenosine + 2 L-methionine + 2 reduced [2Fe-2S]-[ferredoxin]. The protein operates within protein modification; protein lipoylation via endogenous pathway; protein N(6)-(lipoyl)lysine from octanoyl-[acyl-carrier-protein]: step 2/2. In terms of biological role, catalyzes the radical-mediated insertion of two sulfur atoms into the C-6 and C-8 positions of the octanoyl moiety bound to the lipoyl domains of lipoate-dependent enzymes, thereby converting the octanoylated domains into lipoylated derivatives. The protein is Lipoyl synthase of Mycobacterium sp. (strain JLS).